Consider the following 488-residue polypeptide: 3-octaprenyl-4-hydroxybenzoate carboxy-lyase (488 aa).

Asn-172 lines the Mn(2+) pocket. Prenylated FMN-binding positions include 175–177, 189–191, and 194–195; these read IYR, RWL, and RG. A Mn(2+)-binding site is contributed by Glu-238. The Proton donor role is filled by Asp-287.

This sequence belongs to the UbiD family. In terms of assembly, homohexamer. The cofactor is prenylated FMN. It depends on Mn(2+) as a cofactor.

It is found in the cell membrane. The catalysed reaction is a 4-hydroxy-3-(all-trans-polyprenyl)benzoate + H(+) = a 2-(all-trans-polyprenyl)phenol + CO2. The protein operates within cofactor biosynthesis; ubiquinone biosynthesis. In terms of biological role, catalyzes the decarboxylation of 3-octaprenyl-4-hydroxy benzoate to 2-octaprenylphenol, an intermediate step in ubiquinone biosynthesis. In Alkalilimnicola ehrlichii (strain ATCC BAA-1101 / DSM 17681 / MLHE-1), this protein is 3-octaprenyl-4-hydroxybenzoate carboxy-lyase.